Consider the following 313-residue polypeptide: Ribose-phosphate pyrophosphokinase (313 aa).

ATP-binding positions include 37–39 and 96–97; these read DGE and RQ. The Mg(2+) site is built by His131 and Asp170. Lys193 is a catalytic residue. D-ribose 5-phosphate-binding positions include Arg195, Asp219, and 223-227; that span reads DTAGT.

The protein belongs to the ribose-phosphate pyrophosphokinase family. Class I subfamily. Homohexamer. Requires Mg(2+) as cofactor.

The protein localises to the cytoplasm. The catalysed reaction is D-ribose 5-phosphate + ATP = 5-phospho-alpha-D-ribose 1-diphosphate + AMP + H(+). It participates in metabolic intermediate biosynthesis; 5-phospho-alpha-D-ribose 1-diphosphate biosynthesis; 5-phospho-alpha-D-ribose 1-diphosphate from D-ribose 5-phosphate (route I): step 1/1. Its function is as follows. Involved in the biosynthesis of the central metabolite phospho-alpha-D-ribosyl-1-pyrophosphate (PRPP) via the transfer of pyrophosphoryl group from ATP to 1-hydroxyl of ribose-5-phosphate (Rib-5-P). The protein is Ribose-phosphate pyrophosphokinase of Pseudomonas putida (strain ATCC 47054 / DSM 6125 / CFBP 8728 / NCIMB 11950 / KT2440).